A 456-amino-acid polypeptide reads, in one-letter code: Yersinopine synthase (456 aa).

NADP(+)-binding positions include 12–15 (AGPA), 35–40 (NRPSTK), and threonine 154. Histidine 242 (proton donor/acceptor) is an active-site residue.

It belongs to the staphylopine dehydrogenase family. Homodimer.

It carries out the reaction yersinopine + NADP(+) + H2O = (2S)-2-amino-4-{[(1S)-1-carboxy-2-(1H-imidazol-4-yl)ethyl]amino}butanoate + pyruvate + NADPH + H(+). Functionally, catalyzes the NADPH-dependent reductive condensation of pyruvate to the intermediate formed by the adjacently encoded enzyme y2836, namely (2S)-2-amino-4-{[(1S)-1-carboxy-2-(1H-imidazol-4-yl)ethyl]amino}butanoate, leading to the production of yersinopine. This is the last step in the biosynthesis of the metallophore yersinopine, which is involved in metal acquisition and thus enables bacterial growth inside the host, where metal access is limited. Therefore, this enzyme probably contributes to Yersinia virulence. Cannot use alpha-ketoglutarate in place of pyruvate, and displays only poor efficiency with oxaloacetate and glyoxylate. The polypeptide is Yersinopine synthase (Yersinia pestis).